The chain runs to 260 residues: Membrane protein insertase YidC 1 (260 aa).

The first 22 residues, 1 to 22 (MLKSYRAVLVSLSLLLVFVLSG), serve as a signal peptide directing secretion. Cysteine 23 carries the N-palmitoyl cysteine lipid modification. Cysteine 23 is lipidated: S-diacylglycerol cysteine. The next 5 helical transmembrane spans lie at 29–49 (IDAHSTGIWDHYFVYPISFMI), 52–72 (VAHHIPGASFGIAIIIMTLVI), 133–153 (LAGCWPLLIQMPIFSALYYAI), 164–184 (FLWVNLGHADPYHILPIIAAL), and 213–233 (MPAMILFMGFAAPSGLVLYWI).

The protein belongs to the OXA1/ALB3/YidC family. Type 2 subfamily.

It localises to the cell membrane. In terms of biological role, required for the insertion and/or proper folding and/or complex formation of integral membrane proteins into the membrane. Involved in integration of membrane proteins that insert both dependently and independently of the Sec translocase complex, as well as at least some lipoproteins. In Bacillus anthracis, this protein is Membrane protein insertase YidC 1.